Here is a 198-residue protein sequence, read N- to C-terminus: Probable GTP-binding protein EngB (198 aa).

Positions Asn-21–Val-195 constitute an EngB-type G domain. GTP is bound by residues Gly-29–Ser-36, Gly-56–Leu-60, Asp-75–Gly-78, Thr-142–Asp-145, and Val-174–Asn-176. Mg(2+)-binding residues include Ser-36 and Thr-58.

It belongs to the TRAFAC class TrmE-Era-EngA-EngB-Septin-like GTPase superfamily. EngB GTPase family. Requires Mg(2+) as cofactor.

Necessary for normal cell division and for the maintenance of normal septation. The chain is Probable GTP-binding protein EngB from Mesoplasma florum (strain ATCC 33453 / NBRC 100688 / NCTC 11704 / L1) (Acholeplasma florum).